Consider the following 122-residue polypeptide: Large ribosomal subunit protein bL19 (122 aa).

It belongs to the bacterial ribosomal protein bL19 family.

Its function is as follows. This protein is located at the 30S-50S ribosomal subunit interface and may play a role in the structure and function of the aminoacyl-tRNA binding site. The sequence is that of Large ribosomal subunit protein bL19 from Chlamydia felis (strain Fe/C-56) (Chlamydophila felis).